The primary structure comprises 387 residues: Diels-Alderase ORF3 (387 aa).

It belongs to the Diels-Alderase family.

It participates in secondary metabolite biosynthesis. Its function is as follows. Diels-Alderase; part of the gene cluster that mediates the biosynthesis of a tyrosine-derived cytochalasan acting as a fungal signal recognized by resistant rice plants and leads to avirulence in Pi33 resistant rice cultivars. The first step in the pathway is catalyzed by the hybrid PKS-NRPS ACE1, assisted by the enoyl reductase RAP1, that are responsible for fusion of the tyrosine precursor and the polyketide backbone. The polyketide synthase module (PKS) of ACE1 is responsible for the synthesis of the polyketide backbone and the downstream nonribosomal peptide synthetase (NRPS) amidates the carboxyl end of the polyketide with the tyrosine precursor. Because ACE1 lacks a designated enoylreductase (ER) domain, the required activity is provided the enoyl reductase RAP1. Reduction by the hydrolyase ORFZ, followed by dehydration and intra-molecular Diels-Alder cyclization by the Diels-Alderase ORF3 then yield the required isoindolone-fused macrocycle. A number of oxidative steps catalyzed by the tailoring enzymes identified within the cluster, including cytochrome P450 monooxygenases CYP1 to CYP4, the FAD-linked oxidoreductase OXR2 and the short-chain dehydrogenase/reductase OXR1, are further required to afford the final cytochalasans that confer avirulence and which have still to be identified. The monooxygenase CYP1 has been shown to be a site-selective C-18 hydroxylase whereas the function of CYP3 is the site-selective epoxidation of the C-6/C-7 olefin that is present in some intermediate compounds. Finally, SYN2 and RAP2 are not required for avirulence in Pi33 resistant rice cultivars. The sequence is that of Diels-Alderase ORF3 from Pyricularia oryzae (strain 70-15 / ATCC MYA-4617 / FGSC 8958) (Rice blast fungus).